A 273-amino-acid polypeptide reads, in one-letter code: Formamidopyrimidine-DNA glycosylase (273 aa).

Residue P2 is the Schiff-base intermediate with DNA of the active site. E3 (proton donor) is an active-site residue. K58 serves as the catalytic Proton donor; for beta-elimination activity. H92, R111, and R153 together coordinate DNA. The FPG-type zinc-finger motif lies at 238 to 272 (RVYGREGQKCFNCSSTILKTKNSGRSTFYCKTCQY). Catalysis depends on R262, which acts as the Proton donor; for delta-elimination activity.

Belongs to the FPG family. Monomer. Requires Zn(2+) as cofactor.

It catalyses the reaction Hydrolysis of DNA containing ring-opened 7-methylguanine residues, releasing 2,6-diamino-4-hydroxy-5-(N-methyl)formamidopyrimidine.. The catalysed reaction is 2'-deoxyribonucleotide-(2'-deoxyribose 5'-phosphate)-2'-deoxyribonucleotide-DNA = a 3'-end 2'-deoxyribonucleotide-(2,3-dehydro-2,3-deoxyribose 5'-phosphate)-DNA + a 5'-end 5'-phospho-2'-deoxyribonucleoside-DNA + H(+). Its function is as follows. Involved in base excision repair of DNA damaged by oxidation or by mutagenic agents. Acts as a DNA glycosylase that recognizes and removes damaged bases. Has a preference for oxidized purines, such as 7,8-dihydro-8-oxoguanine (8-oxoG). Has AP (apurinic/apyrimidinic) lyase activity and introduces nicks in the DNA strand. Cleaves the DNA backbone by beta-delta elimination to generate a single-strand break at the site of the removed base with both 3'- and 5'-phosphates. The protein is Formamidopyrimidine-DNA glycosylase of Rickettsia canadensis (strain McKiel).